The primary structure comprises 143 residues: Nucleoside diphosphate kinase (143 aa).

Residues Lys11, Phe59, Arg87, Thr93, Arg104, and Asn114 each contribute to the ATP site. Catalysis depends on His117, which acts as the Pros-phosphohistidine intermediate.

The protein belongs to the NDK family. Homotetramer. Mg(2+) is required as a cofactor.

The protein resides in the cytoplasm. The enzyme catalyses a 2'-deoxyribonucleoside 5'-diphosphate + ATP = a 2'-deoxyribonucleoside 5'-triphosphate + ADP. It carries out the reaction a ribonucleoside 5'-diphosphate + ATP = a ribonucleoside 5'-triphosphate + ADP. In terms of biological role, major role in the synthesis of nucleoside triphosphates other than ATP. The ATP gamma phosphate is transferred to the NDP beta phosphate via a ping-pong mechanism, using a phosphorylated active-site intermediate. This chain is Nucleoside diphosphate kinase, found in Shewanella sp. (strain MR-4).